We begin with the raw amino-acid sequence, 239 residues long: Small ribosomal subunit protein uS3 (239 aa).

The KH type-2 domain maps to 39-107 (VRQVLRKKMS…SVHINVIEVR (69 aa)). Positions 214–239 (GQEKQDDGSRGDRNADRSSRRSREVR) are disordered. The span at 216–239 (EKQDDGSRGDRNADRSSRRSREVR) shows a compositional bias: basic and acidic residues.

Belongs to the universal ribosomal protein uS3 family. In terms of assembly, part of the 30S ribosomal subunit. Forms a tight complex with proteins S10 and S14.

In terms of biological role, binds the lower part of the 30S subunit head. Binds mRNA in the 70S ribosome, positioning it for translation. The polypeptide is Small ribosomal subunit protein uS3 (Xylella fastidiosa (strain M12)).